Consider the following 140-residue polypeptide: Sex-regulated protein janus-B (140 aa).

Arg-42 contributes to the substrate binding site. The Proton acceptor role is filled by His-69. 110–112 (SRT) provides a ligand contact to substrate.

It belongs to the janus family.

Its function is as follows. JanA and janB regulate somatic sex differentiation. This is Sex-regulated protein janus-B (janB) from Drosophila orena (Fruit fly).